The following is a 365-amino-acid chain: Deoxyribonuclease-2-alpha (365 aa).

A signal peptide spans 1–19 (MATLSSLLLTALLWVPVGT). The cysteines at positions 22 and 162 are disulfide-linked. 3 N-linked (GlcNAc...) asparagine glycosylation sites follow: Asn-215, Asn-269, and Asn-293. Intrachain disulfides connect Cys-270/Cys-348 and Cys-311/Cys-330. Residue His-298 is part of the active site.

Belongs to the DNase II family.

The protein localises to the lysosome. The enzyme catalyses Endonucleolytic cleavage to nucleoside 3'-phosphates and 3'-phosphooligonucleotide end-products.. Its function is as follows. Hydrolyzes DNA under acidic conditions with a preference for double-stranded DNA. Plays a major role in the clearance of nucleic acids generated through apoptosis, hence preventing autoinflammation. Necessary for proper fetal development and for definitive erythropoiesis in fetal liver and bone marrow, where it degrades nuclear DNA expelled from erythroid precursor cells. The polypeptide is Deoxyribonuclease-2-alpha (DNASE2) (Bos taurus (Bovine)).